The primary structure comprises 254 residues: Small ribosomal subunit protein uS2 (254 aa).

The interval 228 to 254 (DRGAEKEVEAAEEAPAAEAEAAPATEE) is disordered. Residues 240 to 254 (EAPAAEAEAAPATEE) are compositionally biased toward low complexity.

The protein belongs to the universal ribosomal protein uS2 family.

This Flavobacterium johnsoniae (strain ATCC 17061 / DSM 2064 / JCM 8514 / BCRC 14874 / CCUG 350202 / NBRC 14942 / NCIMB 11054 / UW101) (Cytophaga johnsonae) protein is Small ribosomal subunit protein uS2.